Consider the following 88-residue polypeptide: Small ribosomal subunit protein uS15 (88 aa).

The protein belongs to the universal ribosomal protein uS15 family. Part of the 30S ribosomal subunit. Forms a bridge to the 50S subunit in the 70S ribosome, contacting the 23S rRNA.

One of the primary rRNA binding proteins, it binds directly to 16S rRNA where it helps nucleate assembly of the platform of the 30S subunit by binding and bridging several RNA helices of the 16S rRNA. In terms of biological role, forms an intersubunit bridge (bridge B4) with the 23S rRNA of the 50S subunit in the ribosome. This is Small ribosomal subunit protein uS15 from Psychrobacter cryohalolentis (strain ATCC BAA-1226 / DSM 17306 / VKM B-2378 / K5).